Reading from the N-terminus, the 375-residue chain is Platelet-derived growth factor receptor-like protein (375 aa).

The signal sequence occupies residues 1 to 17 (MKVWLLLGLLLLHEALG). Residues 19 to 63 (VAGQHPPKNKRPKEQGENRIKPTNKKAKPKIPKIKDRDTADSAPK) are disordered. A compositionally biased stretch (basic residues) spans 40 to 50 (PTNKKAKPKIP). One can recognise an Ig-like C2-type 1 domain in the interval 62–159 (PKSQSIMMQA…GYICRRDEAR (98 aa)). A disulfide bond links C96 and C143. Residue N219 is glycosylated (N-linked (GlcNAc...) asparagine). Residues 272–375 (PSTTILASSN…TTVATTVEFS (104 aa)) form the Ig-like C2-type 2 domain. C293 and C357 form a disulfide bridge.

In terms of assembly, forms a complex composed of PDGFRL, TNK2 and GRB2.

The protein localises to the secreted. The protein is Platelet-derived growth factor receptor-like protein (Pdgfrl) of Rattus norvegicus (Rat).